A 198-amino-acid chain; its full sequence is Large ribosomal subunit protein bL25 (198 aa).

This sequence belongs to the bacterial ribosomal protein bL25 family. CTC subfamily. As to quaternary structure, part of the 50S ribosomal subunit; part of the 5S rRNA/L5/L18/L25 subcomplex. Contacts the 5S rRNA. Binds to the 5S rRNA independently of L5 and L18.

In terms of biological role, this is one of the proteins that binds to the 5S RNA in the ribosome where it forms part of the central protuberance. In Streptomyces coelicolor (strain ATCC BAA-471 / A3(2) / M145), this protein is Large ribosomal subunit protein bL25.